Reading from the N-terminus, the 83-residue chain is Normal mucosa of esophagus-specific gene 1 protein (83 aa).

The protein belongs to the complex I NDUFA4 subunit family.

It is found in the nucleus. This is Normal mucosa of esophagus-specific gene 1 protein (Nmes1) from Rattus norvegicus (Rat).